We begin with the raw amino-acid sequence, 120 residues long: Large ribosomal subunit protein bL12 (120 aa).

The protein belongs to the bacterial ribosomal protein bL12 family. Homodimer. Part of the ribosomal stalk of the 50S ribosomal subunit. Forms a multimeric L10(L12)X complex, where L10 forms an elongated spine to which 2 to 4 L12 dimers bind in a sequential fashion. Binds GTP-bound translation factors.

Functionally, forms part of the ribosomal stalk which helps the ribosome interact with GTP-bound translation factors. Is thus essential for accurate translation. This chain is Large ribosomal subunit protein bL12, found in Listeria monocytogenes serovar 1/2a (strain ATCC BAA-679 / EGD-e).